The following is a 238-amino-acid chain: Glycerol-3-phosphate acyltransferase (238 aa).

A run of 6 helical transmembrane segments spans residues V5 to F25, F61 to L81, F88 to I108, I125 to F145, I149 to W169, and A194 to I214.

Belongs to the PlsY family. As to quaternary structure, probably interacts with PlsX.

The protein resides in the cell membrane. It carries out the reaction an acyl phosphate + sn-glycerol 3-phosphate = a 1-acyl-sn-glycero-3-phosphate + phosphate. It functions in the pathway lipid metabolism; phospholipid metabolism. Functionally, catalyzes the transfer of an acyl group from acyl-phosphate (acyl-PO(4)) to glycerol-3-phosphate (G3P) to form lysophosphatidic acid (LPA). This enzyme utilizes acyl-phosphate as fatty acyl donor, but not acyl-CoA or acyl-ACP. This is Glycerol-3-phosphate acyltransferase from Mycoplasma mobile (strain ATCC 43663 / 163K / NCTC 11711) (Mesomycoplasma mobile).